The chain runs to 154 residues: Aspartate carbamoyltransferase regulatory chain (154 aa).

Residues C110, C115, C136, and C139 each coordinate Zn(2+).

Belongs to the PyrI family. Contains catalytic and regulatory chains. It depends on Zn(2+) as a cofactor.

In terms of biological role, involved in allosteric regulation of aspartate carbamoyltransferase. The chain is Aspartate carbamoyltransferase regulatory chain from Halobacterium salinarum (strain ATCC 700922 / JCM 11081 / NRC-1) (Halobacterium halobium).